A 445-amino-acid polypeptide reads, in one-letter code: Phosphoglucosamine mutase 1 (445 aa).

The Phosphoserine intermediate role is filled by serine 102. Mg(2+)-binding residues include serine 102, aspartate 241, aspartate 243, and aspartate 245. At serine 102 the chain carries Phosphoserine.

The protein belongs to the phosphohexose mutase family. Requires Mg(2+) as cofactor. In terms of processing, activated by phosphorylation.

It carries out the reaction alpha-D-glucosamine 1-phosphate = D-glucosamine 6-phosphate. In terms of biological role, catalyzes the conversion of glucosamine-6-phosphate to glucosamine-1-phosphate. In Shewanella baltica (strain OS185), this protein is Phosphoglucosamine mutase 1.